Consider the following 320-residue polypeptide: MYPSIEDDDDLLAALCFDQSNGVEDPYGYMQTNEDNIFQDFGSCGVNLMQPQQEQFDSFNGNLEQVCSSFRGGNNGVVYSSSIGSAQLDLAASFSGVLQQETHQVCGFRGQNDDSAVPHLQQQQGQVFSGVVEINSSSSVGAVKEEFEEECSGKRRRTGSCSKPGTKACREKLRREKLNDKFMDLSSVLEPGRTPKTDKSAILDDAIRVVNQLRGEAHELQETNQKLLEEIKSLKADKNELREEKLVLKAEKEKMEQQLKSMVVPSPGFMPSQHPAAFHSHKMAVAYPYGYYPPNMPMWSPLPPADRDTSRDLKNLPPVA.

A bHLH domain is found at 162–213 (SKPGTKACREKLRREKLNDKFMDLSSVLEPGRTPKTDKSAILDDAIRVVNQL). A disordered region spans residues 299–320 (WSPLPPADRDTSRDLKNLPPVA). Basic and acidic residues predominate over residues 305 to 314 (ADRDTSRDLK).

In terms of assembly, homodimer. As to expression, expressed constitutively in roots, leaves, stems, and flowers.

The protein resides in the nucleus. The sequence is that of Transcription factor bHLH34 (BHLH34) from Arabidopsis thaliana (Mouse-ear cress).